Reading from the N-terminus, the 180-residue chain is MAKMQGRMQGKVAPGDDRGDGLKEKMVAINRVTKVVKGGRILGFAALTVVGNGDGGVGMGKGKSREVPVAVQKAMDEARRKMIKVSLKNGTLQHPVIGRHGAAKVYMQPASEGTGIIAGGPMRAIFEVMGVHNILAKCIGSTNPYNVVRATLNGLQAMSNPAEIAAKRGKSVEEILGLEK.

Residues Met-1 to Asp-20 are disordered. The region spanning Leu-22–Val-85 is the S5 DRBM domain.

Belongs to the universal ribosomal protein uS5 family. Part of the 30S ribosomal subunit. Contacts proteins S4 and S8.

In terms of biological role, with S4 and S12 plays an important role in translational accuracy. Functionally, located at the back of the 30S subunit body where it stabilizes the conformation of the head with respect to the body. This is Small ribosomal subunit protein uS5 from Nitrosospira multiformis (strain ATCC 25196 / NCIMB 11849 / C 71).